A 692-amino-acid chain; its full sequence is MGTVSSRRSWWPLPLLLLLLLLLGPAGARAQEDEDGDYEELVLALRSEEDGLAEAPEHGTTATFHRCAKDPWRLPGTYVVVLKEETHLSQSERTARRLQAQAARRGYLTKILHVFHGLLPGFLVKMSGDLLELALKLPHVDYIEEDSSVFAQSIPWNLERITPPRYRADEYQPPDGGSLVEVYLLDTSIQSDHREIEGRVMVTDFENVPEEDGTRFHRQASKCDSHGTHLAGVVSGRDAGVAKGASMRSLRVLNCQGKGTVSGTLIGLEFIRKSQLVQPVGPLVVLLPLAGGYSRVLNAACQRLARAGVVLVTAAGNFRDDACLYSPASAPEVITVGATNAQDQPVTLGTLGTNFGRCVDLFAPGEDIIGASSDCSTCFVSQSGTSQAAAHVAGIAAMMLSAEPELTLAELRQRLIHFSAKDVINEAWFPEDQRVLTPNLVAALPPSTHGAGWQLFCRTVWSAHSGPTRMATAVARCAPDEELLSCSSFSRSGKRRGERMEAQGGKLVCRAHNAFGGEGVYAIARCCLLPQANCSIHTAPPAEAGMGTRVHCHQQGHVLTGCSSHWEVEDLGTHKPPMLRPRGQPNQCVGHREASIHASCCRAPGLECKVKEHGIPAPQEQVTVACEEGWTLTGCSALPGTSHVLGAYAVDNTCVVRSRDVSTAGSTSEEAVAAVAICCRSRHLAQASQELQ.

Positions 1 to 30 (MGTVSSRRSWWPLPLLLLLLLLLGPAGARA) are cleaved as a signal peptide. Residues 31–152 (QEDEDGDYEE…IEEDSSVFAQ (122 aa)) constitute a propeptide that is removed on maturation. At Tyr38 the chain carries Sulfotyrosine. Ser47 carries the phosphoserine modification. Residues 77–149 (TYVVVLKEET…VDYIEEDSSV (73 aa)) form the Inhibitor I9 domain. The Peptidase S8 domain maps to 155 to 461 (PWNLERITPP…GWQLFCRTVW (307 aa)). Active-site charge relay system residues include Asp186 and His226. Disulfide bonds link Cys223–Cys255 and Cys323–Cys358. Catalysis depends on Ser386, which acts as the Charge relay system. A C-terminal domain region spans residues 450–692 (GAGWQLFCRT…HLAQASQELQ (243 aa)). 3 cysteine pairs are disulfide-bonded: Cys457–Cys527, Cys477–Cys526, and Cys486–Cys509. N-linked (GlcNAc...) asparagine glycosylation occurs at Asn533. Disulfide bonds link Cys534-Cys601, Cys552-Cys600, Cys562-Cys588, Cys608-Cys679, Cys626-Cys678, and Cys635-Cys654. Ser688 bears the Phosphoserine mark.

It belongs to the peptidase S8 family. As to quaternary structure, monomer. Can self-associate to form dimers and higher multimers which may have increased LDLR degrading activity. The precursor protein but not the mature protein may form multimers. Interacts with APOB, VLDLR, LRP8/APOER2 and BACE1. The full-length immature form (pro-PCSK9) interacts with SCNN1A, SCNN1B and SCNN1G. The pro-PCSK9 form (via C-terminal domain) interacts with LDLR. Interacts (via the C-terminal domain) with ANXA2 (via repeat Annexin 1); the interaction inhibits the degradation of LDLR. It depends on Ca(2+) as a cofactor. Cleavage by furin and PCSK5 generates a truncated inactive protein that is unable to induce LDLR degradation. In terms of processing, undergoes autocatalytic cleavage in the endoplasmic reticulum to release the propeptide from the N-terminus and the cleavage of the propeptide is strictly required for its maturation and activation. The cleaved propeptide however remains associated with the catalytic domain through non-covalent interactions, preventing potential substrates from accessing its active site. As a result, it is secreted from cells as a propeptide-containing, enzymatically inactive protein. Post-translationally, phosphorylation protects the propeptide against proteolysis.

The protein localises to the cytoplasm. The protein resides in the secreted. Its subcellular location is the endosome. It is found in the lysosome. It localises to the cell surface. The protein localises to the endoplasmic reticulum. The protein resides in the golgi apparatus. With respect to regulation, its proteolytic activity is autoinhibited by the non-covalent binding of the propeptide to the catalytic domain. Inhibited by EGTA. Its function is as follows. Crucial player in the regulation of plasma cholesterol homeostasis. Binds to low-density lipid receptor family members: low density lipoprotein receptor (LDLR), very low density lipoprotein receptor (VLDLR), apolipoprotein E receptor (LRP1/APOER) and apolipoprotein receptor 2 (LRP8/APOER2), and promotes their degradation in intracellular acidic compartments. Acts via a non-proteolytic mechanism to enhance the degradation of the hepatic LDLR through a clathrin LDLRAP1/ARH-mediated pathway. May prevent the recycling of LDLR from endosomes to the cell surface or direct it to lysosomes for degradation. Can induce ubiquitination of LDLR leading to its subsequent degradation. Inhibits intracellular degradation of APOB via the autophagosome/lysosome pathway in a LDLR-independent manner. Involved in the disposal of non-acetylated intermediates of BACE1 in the early secretory pathway. Inhibits epithelial Na(+) channel (ENaC)-mediated Na(+) absorption by reducing ENaC surface expression primarily by increasing its proteasomal degradation. Regulates neuronal apoptosis via modulation of LRP8/APOER2 levels and related anti-apoptotic signaling pathways. This chain is Proprotein convertase subtilisin/kexin type 9 (PCSK9), found in Pan troglodytes (Chimpanzee).